The chain runs to 419 residues: Acyl transferase 9 (419 aa).

Catalysis depends on proton acceptor residues H161 and D362.

This sequence belongs to the plant acyltransferase family.

In terms of biological role, involved in the incorporation of ferulate into the cell wall. May act as arabinoxylan feruloyl transferase. The polypeptide is Acyl transferase 9 (Oryza sativa subsp. japonica (Rice)).